Consider the following 805-residue polypeptide: Acetyl-CoA decarbonylase/synthase complex subunit alpha 2 (805 aa).

The [4Fe-4S] cluster site is built by Cys-72, Cys-75, Cys-76, Cys-78, Cys-83, and Cys-93. Residue His-116 coordinates CO. Residues His-249, Cys-277, and Cys-322 each contribute to the [Ni-4Fe-4S] cluster site. 4Fe-4S ferredoxin-type domains are found at residues 407-435 and 445-474; these read EEFKVYIDKCVKCGECMLACPEELDIPEA and EYLEALHDVCIGCRRCEQVCKKEIPILNVL. The [4Fe-4S] cluster site is built by Cys-416, Cys-419, Cys-422, Cys-426, Cys-454, Cys-457, Cys-460, and Cys-464. [Ni-4Fe-4S] cluster-binding residues include Cys-522, Cys-551, and Cys-586.

It belongs to the Ni-containing carbon monoxide dehydrogenase family. As to quaternary structure, heterotetramer of two alpha and two epsilon subunits. The ACDS complex is made up of alpha, epsilon, beta, gamma and delta subunits with a probable stoichiometry of (alpha(2)epsilon(2))(4)-beta(8)-(gamma(1)delta(1))(8). It depends on [4Fe-4S] cluster as a cofactor. [Ni-4Fe-4S] cluster serves as cofactor.

It carries out the reaction CO + 2 oxidized [2Fe-2S]-[ferredoxin] + H2O = 2 reduced [2Fe-2S]-[ferredoxin] + CO2 + 2 H(+). The protein operates within one-carbon metabolism; methanogenesis from acetate. Functionally, part of the ACDS complex that catalyzes the reversible cleavage of acetyl-CoA, allowing growth on acetate as sole source of carbon and energy. The alpha-epsilon subcomponent functions as a carbon monoxide dehydrogenase. This chain is Acetyl-CoA decarbonylase/synthase complex subunit alpha 2, found in Methanosarcina acetivorans (strain ATCC 35395 / DSM 2834 / JCM 12185 / C2A).